We begin with the raw amino-acid sequence, 191 residues long: Cytochrome c oxidase assembly protein CtaG (191 aa).

Residues 1–9 (MSLSPHQKT) lie on the Cytoplasmic side of the membrane. A helical; Signal-anchor for type II membrane protein membrane pass occupies residues 10-30 (AGGLVLVVAVMGAASFAAVPF). The Periplasmic segment spans residues 31 to 191 (YNWFCRVTGF…LAAESATDVN (161 aa)).

This sequence belongs to the COX11/CtaG family.

Its subcellular location is the cell inner membrane. Its function is as follows. Exerts its effect at some terminal stage of cytochrome c oxidase synthesis, probably by being involved in the insertion of the copper B into subunit I. This chain is Cytochrome c oxidase assembly protein CtaG, found in Cereibacter sphaeroides (strain ATCC 17023 / DSM 158 / JCM 6121 / CCUG 31486 / LMG 2827 / NBRC 12203 / NCIMB 8253 / ATH 2.4.1.) (Rhodobacter sphaeroides).